The chain runs to 108 residues: Putative pterin-4-alpha-carbinolamine dehydratase (108 aa).

This sequence belongs to the pterin-4-alpha-carbinolamine dehydratase family.

It carries out the reaction (4aS,6R)-4a-hydroxy-L-erythro-5,6,7,8-tetrahydrobiopterin = (6R)-L-erythro-6,7-dihydrobiopterin + H2O. This chain is Putative pterin-4-alpha-carbinolamine dehydratase, found in Chromobacterium violaceum (strain ATCC 12472 / DSM 30191 / JCM 1249 / CCUG 213 / NBRC 12614 / NCIMB 9131 / NCTC 9757 / MK).